The primary structure comprises 211 residues: Thiamine-phosphate synthase (211 aa).

Residues Q37–K41 and N69 each bind 4-amino-2-methyl-5-(diphosphooxymethyl)pyrimidine. Residues D70 and D89 each contribute to the Mg(2+) site. S108 lines the 4-amino-2-methyl-5-(diphosphooxymethyl)pyrimidine pocket. T134 to T136 contacts 2-[(2R,5Z)-2-carboxy-4-methylthiazol-5(2H)-ylidene]ethyl phosphate. K137 provides a ligand contact to 4-amino-2-methyl-5-(diphosphooxymethyl)pyrimidine. Residues G166 and I186–S187 contribute to the 2-[(2R,5Z)-2-carboxy-4-methylthiazol-5(2H)-ylidene]ethyl phosphate site.

This sequence belongs to the thiamine-phosphate synthase family. Requires Mg(2+) as cofactor.

It catalyses the reaction 2-[(2R,5Z)-2-carboxy-4-methylthiazol-5(2H)-ylidene]ethyl phosphate + 4-amino-2-methyl-5-(diphosphooxymethyl)pyrimidine + 2 H(+) = thiamine phosphate + CO2 + diphosphate. The catalysed reaction is 2-(2-carboxy-4-methylthiazol-5-yl)ethyl phosphate + 4-amino-2-methyl-5-(diphosphooxymethyl)pyrimidine + 2 H(+) = thiamine phosphate + CO2 + diphosphate. It carries out the reaction 4-methyl-5-(2-phosphooxyethyl)-thiazole + 4-amino-2-methyl-5-(diphosphooxymethyl)pyrimidine + H(+) = thiamine phosphate + diphosphate. It participates in cofactor biosynthesis; thiamine diphosphate biosynthesis; thiamine phosphate from 4-amino-2-methyl-5-diphosphomethylpyrimidine and 4-methyl-5-(2-phosphoethyl)-thiazole: step 1/1. Its function is as follows. Condenses 4-methyl-5-(beta-hydroxyethyl)thiazole monophosphate (THZ-P) and 2-methyl-4-amino-5-hydroxymethyl pyrimidine pyrophosphate (HMP-PP) to form thiamine monophosphate (TMP). This is Thiamine-phosphate synthase from Shigella boydii serotype 4 (strain Sb227).